The following is a 492-amino-acid chain: Stomatal closure-related actin-binding protein 2 (492 aa).

A coiled-coil region spans residues 112-132 (LKKLRDALETMRGRMDGRNRE).

The protein belongs to the SCAB family. As to expression, expressed in roots, stems, leaves, siliques and flowers.

It is found in the cytoplasm. It localises to the cytoskeleton. Probable plant-specific actin binding protein that bundles and stabilizes microfilaments (MFs). This Arabidopsis thaliana (Mouse-ear cress) protein is Stomatal closure-related actin-binding protein 2.